We begin with the raw amino-acid sequence, 239 residues long: MNKNIVIKSMAALAILTSVTGINAAVVEETQQIANAEKNVTQVKDTNIFPYNGVVSFKDATGFVIGKNTIITNKHVSKDYKVGDRITAHPNGDKGNGGIYKIKSISDYPGDEDISVMNIEEQAVERGPKGFNFNENVQAFNFAKDAKVDDKIKVIGYPLPAQNSFKQFESTGTIKRIKDNILNFDAYIEPGNSGSPVLNSNNEVIGVVYGGIGKIGSEYNGAVYFTPQIKDFIQKHIEQ.

The signal sequence occupies residues 1–36 (MNKNIVIKSMAALAILTSVTGINAAVVEETQQIANA). Catalysis depends on charge relay system residues His-75, Asp-113, and Ser-193.

Belongs to the peptidase S1B family.

It is found in the secreted. In Staphylococcus aureus (strain USA300 / TCH1516), this protein is Serine protease SplC (splC).